Consider the following 460-residue polypeptide: Serine hydroxymethyltransferase, cytosolic (460 aa).

N6-(pyridoxal phosphate)lysine is present on Lys-244.

This sequence belongs to the SHMT family. Homotetramer. Pyridoxal 5'-phosphate serves as cofactor.

The protein resides in the cytoplasm. The enzyme catalyses (6R)-5,10-methylene-5,6,7,8-tetrahydrofolate + glycine + H2O = (6S)-5,6,7,8-tetrahydrofolate + L-serine. Its pathway is one-carbon metabolism; tetrahydrofolate interconversion. In terms of biological role, interconversion of serine and glycine. The sequence is that of Serine hydroxymethyltransferase, cytosolic (SHMT-1) from Encephalitozoon cuniculi (strain GB-M1) (Microsporidian parasite).